The chain runs to 848 residues: Trimethylamine-N-oxide reductase 1 (848 aa).

Residues 1–39 (MNNNDLFQASRRRFLAQLGGLTVAGMLGTSLLTPRRATA) constitute a signal peptide (tat-type signal). A Mo-bis(molybdopterin guanine dinucleotide)-binding site is contributed by serine 191.

This sequence belongs to the prokaryotic molybdopterin-containing oxidoreductase family. Mo-bis(molybdopterin guanine dinucleotide) is required as a cofactor. Predicted to be exported by the Tat system. The position of the signal peptide cleavage has not been experimentally proven.

It is found in the periplasm. It carries out the reaction trimethylamine + 2 Fe(III)-[cytochrome c] + H2O = trimethylamine N-oxide + 2 Fe(II)-[cytochrome c] + 3 H(+). Functionally, reduces trimethylamine-N-oxide (TMAO) into trimethylamine; an anaerobic reaction coupled to energy-yielding reactions. The polypeptide is Trimethylamine-N-oxide reductase 1 (torA) (Escherichia coli O6:H1 (strain CFT073 / ATCC 700928 / UPEC)).